The sequence spans 150 residues: Centrin-B (150 aa).

EF-hand domains lie at 12 to 46 (DQIS…LGCE), 80 to 114 (DSMS…IGEE), and 115 to 150 (CSDS…KKVL). D128, D130, D132, and E139 together coordinate Ca(2+).

This sequence belongs to the centrin family.

The protein localises to the cytoplasm. It is found in the cytoskeleton. It localises to the microtubule organizing center. The protein resides in the centrosome. Functionally, plays a fundamental role in microtubule-organizing center structure and function. The sequence is that of Centrin-B (cenB) from Dictyostelium discoideum (Social amoeba).